We begin with the raw amino-acid sequence, 1028 residues long: Unconventional myosin-Ic (1028 aa).

At M1 the chain carries N-acetylmethionine. The 685-residue stretch at 12-696 folds into the Myosin motor domain; it reads GVQDFVLLEN…TLFATEDALE (685 aa). ATP contacts are provided by residues N53, Y61, 104–113, and 157–161; these read SGESGAGKTE and NDNSS. The residue at position 348 (K348) is an N6-methyllysine. Positions 573-595 are actin-binding; the sequence is LSKLMEILMSKQPSYVRCIKPND. IQ domains follow at residues 699 to 728 and 722 to 751; these read KHSI…SAVE and MKHS…AVDV. The region spanning 850–1024 is the TH1 domain; that stretch reads KDNYPQSVPR…NGHLSVVAPR (175 aa).

The protein belongs to the TRAFAC class myosin-kinesin ATPase superfamily. Myosin family. In terms of assembly, interacts (via its IQ motifs) with calmodulin. In terms of tissue distribution, expressed in brain and the sacculus of the internal ear.

The protein localises to the cytoplasm. It localises to the cell membrane. The protein resides in the cell projection. It is found in the ruffle membrane. Its subcellular location is the cytoplasmic vesicle. The protein localises to the stereocilium membrane. Functionally, myosins are actin-based motor molecules with ATPase activity. Unconventional myosins serve in intracellular movements. Their highly divergent tails are presumed to bind to membranous compartments, which would be moved relative to actin filaments. The sequence is that of Unconventional myosin-Ic (Myo1c) from Aquarana catesbeiana (American bullfrog).